Consider the following 605-residue polypeptide: Ras guanine nucleotide exchange factor A (605 aa).

Residues 67-99 (DKTAIIQLILQHLSTKGLKQTKQTLEKEARTTT) enclose the LisH domain. In terms of domain architecture, N-terminal Ras-GEF spans 198–320 (DDEVVKFASL…SLTKMVEKLS (123 aa)). The 245-residue stretch at 353–597 (DEEEIARQLT…YRESLKREPK (245 aa)) folds into the Ras-GEF domain.

As to quaternary structure, component of the Sca1 complex composed of at least gefA, gefH, scaA, phr, and the protein phosphatase 2A subunits pppA and pho2B. Interacts directly with gefH.

It is found in the cell membrane. In terms of biological role, ras-bound GDP/GTP exchange factor required for normal activation of adenylyl cyclase. Component of the Sca1 complex, a regulator of cell motility, chemotaxis and signal relay. The Sca1 complex is recruited to the plasma membrane in a chemoattractant- and F-actin-dependent manner and is enriched at the leading edge of chemotaxing cells where it regulates F-actin dynamics and signal relay by controlling the activation of rasC and the downstream target of rapamycin complex 2 (TORC2)-Akt/protein kinase B (PKB) pathway. This chain is Ras guanine nucleotide exchange factor A (gefA), found in Dictyostelium discoideum (Social amoeba).